The sequence spans 207 residues: Small ribosomal subunit protein uS4A (207 aa).

In terms of domain architecture, S4 RNA-binding spans 98–158; sequence TRLDNVAYRL…EKSKSSAKFK (61 aa).

Belongs to the universal ribosomal protein uS4 family. In terms of assembly, part of the 30S ribosomal subunit. Contacts protein S5. The interaction surface between S4 and S5 is involved in control of translational fidelity.

In terms of biological role, one of the primary rRNA binding proteins, it binds directly to 16S rRNA where it nucleates assembly of the body of the 30S subunit. With S5 and S12 plays an important role in translational accuracy. In Alkaliphilus oremlandii (strain OhILAs) (Clostridium oremlandii (strain OhILAs)), this protein is Small ribosomal subunit protein uS4A.